Here is a 1075-residue protein sequence, read N- to C-terminus: Protein nervous wreck (1075 aa).

An F-BAR domain is found at 11–289 (VKFLKNLHTE…QAQQLTREYN (279 aa)). 2 disordered regions span residues 361–381 (LRDS…LDTK) and 431–536 (SASS…DEPI). A compositionally biased stretch (polar residues) spans 431–453 (SASSISMRTDASGQGENPSSDSF). Basic and acidic residues predominate over residues 469 to 482 (PKQEQQLSRDRTFS). The span at 493–512 (SAAAASSAAAASSSMMASSA) shows a compositional bias: low complexity. 2 consecutive SH3 domains span residues 542–603 (EAIF…IDQE) and 658–721 (SDVE…ECDE). Disordered stretches follow at residues 722 to 747 (MGEP…LPPA), 769 to 837 (SQDT…EKGA), and 864 to 917 (GADK…EGNA). Pro residues-rich tracts occupy residues 733–747 (SPPP…LPPA) and 809–818 (QPPPSLPPPQ). A compositionally biased stretch (low complexity) spans 819-837 (LAKAGGSAPGSGSKVEKGA). Basic and acidic residues predominate over residues 883–897 (VSKEQPAEVAKKPDI).

Homodimer. Interacts (via SH3 domain 1) with WASp. Interacts (via SH3 domain 1) with shi/dynamin. Interacts (via SH3 domain 2) with Dap160. Interacts (via F-BAR domain) with SH3PX1. Interacts (via SH3 domain 2) with Snx16. Identified in a complex with Syn and Syt1. As to expression, detected in larval body wall muscle. Detected at the neuromuscular junction, on motoneuron axons and axon terminals, at synaptic boutons in the periactive zone surrounding the synapse (at protein level). Detected on motoneuron axons and axon terminals, at synaptic boutons in the periactive zone surrounding the synapse.

The protein localises to the endomembrane system. Its subcellular location is the synapse. It localises to the cell projection. It is found in the axon. The protein resides in the presynaptic cell membrane. The protein localises to the cytoplasmic vesicle. Its subcellular location is the secretory vesicle. It localises to the synaptic vesicle. It is found in the recycling endosome. Functionally, adapter protein that provides a link between vesicular membrane traffic and the actin assembly machinery. Acts together with Cdc42 to stimulate actin nucleation mediated by WASp and the ARP2/3 complex. Binds to membranes enriched in phosphatidylinositol 4,5-bisphosphate and causes local membrane deformation. Required for normal structure and function of synapses at the neuromuscular junction. Plays a role in synaptic vesicle trafficking. Required for the release of a normal number of synaptic vesicles per action potential. The protein is Protein nervous wreck of Drosophila melanogaster (Fruit fly).